We begin with the raw amino-acid sequence, 409 residues long: Outer membrane protein assembly factor BamB (409 aa).

Residues 1–34 (MAGNILLLILDYVFHAGSRTLRVCILSLLILLSG) form the signal peptide. The N-palmitoyl cysteine moiety is linked to residue Cys35. Residue Cys35 is the site of S-diacylglycerol cysteine attachment.

Belongs to the BamB family. Part of the Bam complex.

The protein localises to the cell outer membrane. Its function is as follows. Part of the outer membrane protein assembly complex, which is involved in assembly and insertion of beta-barrel proteins into the outer membrane. This chain is Outer membrane protein assembly factor BamB, found in Nitrosomonas eutropha (strain DSM 101675 / C91 / Nm57).